Here is an 827-residue protein sequence, read N- to C-terminus: Leucine--tRNA ligase (827 aa).

The 'HIGH' region signature appears at P42–H52. The 'KMSKS' region signature appears at K583–S587. K586 provides a ligand contact to ATP.

The protein belongs to the class-I aminoacyl-tRNA synthetase family.

It localises to the cytoplasm. The enzyme catalyses tRNA(Leu) + L-leucine + ATP = L-leucyl-tRNA(Leu) + AMP + diphosphate. This chain is Leucine--tRNA ligase, found in Pelotomaculum thermopropionicum (strain DSM 13744 / JCM 10971 / SI).